The sequence spans 1987 residues: MNSRADPGDRYFRVPLENQTQQEFMGSWIPFTPKKPRSSLMVDERVINQDLNGFPGGEFVDRGFCNTGVDHNGVFDHGAHQGVTNLSMMINSLAGSHAQAWSNSERDLLGRSEVTSPLAPVIRNTTGNVEPVNGNFTSDVGMVNGPFTQSGTSQAGYNEFELDDLLNPDQMPFSFTSLLSGGDSLFKVRQYGPPACNKPLYNLNSPIRREAVGSVCESSFQYVPSTPSLFRTGEKTGFLEQIVTTTGHEIPEPKSDKSMQSIMDSSAVNATEATEQNDGSRQDVLEFDLNKTPQQKPSKRKRKFMPKVVVEGKPKRKPRKPAELPKVVVEGKPKRKPRKAATQEKVKSKETGSAKKKNLKESATKKPANVGDMSNKSPEVTLKSCRKALNFDLENPGDARQGDSESEIVQNSSGANSFSEIRDAIGGTNGSFLDSVSQIDKTNGLGAMNQPLEVSMGNQPDKLSTGAKLARDQQPDLLTRNQQCQFPVATQNTQFPMENQQAWLQMKNQLIGFPFGNQQPRMTIRNQQPCLAMGNQQPMYLIGTPRPALVSGNQQLGGPQGNKRPIFLNHQTCLPAGNQLYGSPTDMHQLVMSTGGQQHGLLIKNQQPGSLIRGQQPCVPLIDQQPATPKGFTHLNQMVATSMSSPGLRPHSQSQVPTTYLHVESVSRILNGTTGTCQRSRAPAYDSLQQDIHQGNKYILSHEISNGNGCKKALPQNSSLPTPIMAKLEEARGSKRQYHRAMGQTEKHDLNLAQQIAQSQDVERHNSSTCVEYLDAAKKTKIQKVVQENLHGMPPEVIEIEDDPTDGARKGKNTASISKGASKGNSSPVKKTAEKEKCIVPKTPAKKGRAGRKKSVPPPAHASEIQLWQPTPPKTPLSRSKPKGKGRKSIQDSGKARGPSGELLCQDSIAEIIYRMQNLYLGDKEREQEQNAMVLYKGDGALVPYESKKRKPRPKVDIDDETTRIWNLLMGKGDEKEGDEEKDKKKEKWWEEERRVFRGRADSFIARMHLVQGDRRFSPWKGSVVDSVIGVFLTQNVSDHLSSSAFMSLAARFPPKLSSSREDERNVRSVVVEDPEGCILNLNEIPSWQEKVQHPSDMEVSGVDSGSKEQLRDCSNSGIERFNFLEKSIQNLEEEVLSSQDSFDPAIFQSCGRVGSCSCSKSDAEFPTTRCETKTVSGTSQSVQTGSPNLSDEICLQGNERPHLYEGSGDVQKQETTNVAQKKPDLEKTMNWKDSVCFGQPRNDTNWQTTPSSSYEQCATRQPHVLDIEDFGMQGEGLGYSWMSISPRVDRVKNKNVPRRFFRQGGSVPREFTGQIIPSTPHELPGMGLSGSSSAVQEHQDDTQHNQQDEMNKASHLQKTFLDLLNSSEECLTRQSSTKQNITDGCLPRDRTAEDVVDPLSNNSSLQNILVESNSSNKEQTAVEYKETNATILREMKGTLADGKKPTSQWDSLRKDVEGNEGRQERNKNNMDSIDYEAIRRASISEISEAIKERGMNNMLAVRIKDFLERIVKDHGGIDLEWLRESPPDKAKDYLLSIRGLGLKSVECVRLLTLHNLAFPVDTNVGRIAVRMGWVPLQPLPESLQLHLLELYPVLESIQKFLWPRLCKLDQRTLYELHYQLITFGKVFCTKSRPNCNACPMRGECRHFASAYASARLALPAPEERSLTSATIPVPPESYPPVAIPMIELPLPLEKSLASGAPSNRENCEPIIEEPASPGQECTEITESDIEDAYYNEDPDEIPTIKLNIEQFGMTLREHMERNMELQEGDMSKALVALHPTTTSIPTPKLKNISRLRTEHQVYELPDSHRLLDGMDKREPDDPSPYLLAIWTPGETANSAQPPEQKCGGKASGKMCFDETCSECNSLREANSQTVRGTLLIPCRTAMRGSFPLNGTYFQVNELFADHESSLKPIDVPRDWIWDLPRRTVYFGTSVTSIFRGLSTEQIQFCFWKGFVCVRGFEQKTRAPRPLMARLHFPASKLKNNKT.

3 disordered regions span residues 246–378 (TGHE…NKSP), 392–415 (DLEN…SSGA), and 793–901 (MPPE…GPSG). Positions 258–277 (SMQSIMDSSAVNATEATEQN) are enriched in polar residues. A compositionally biased stretch (basic and acidic residues) spans 341-364 (ATQEKVKSKETGSAKKKNLKESAT). The span at 813-829 (NTASISKGASKGNSSPV) shows a compositional bias: polar residues. Basic residues predominate over residues 844–855 (PAKKGRAGRKKS). The tract at residues 955-1054 (KVDIDDETTR…AFMSLAARFP (100 aa)) is DEMETER. Disordered stretches follow at residues 1324 to 1351 (LPGM…QDEM) and 1439 to 1471 (TLAD…KNNM). Composition is skewed to basic and acidic residues over residues 1338 to 1351 (EHQD…QDEM) and 1452 to 1469 (SLRK…RNKN). The [4Fe-4S] cluster site is built by cysteine 1629, cysteine 1636, cysteine 1639, and cysteine 1645.

Belongs to the DNA glycosylase family. DEMETER subfamily. Requires [4Fe-4S] cluster as cofactor. As to expression, mainly expressed in immature flower buds, then decreases as the flower matures. Expressed in the ovule carpels, but not expressed in pollen stamens. Expressed in developing and mature ovules (stages 12-14), then strongly decreases after fertilization.

The protein localises to the nucleus. Transcriptional activator involved in gene imprinting. Catalyzes the release of 5-methylcytosine (5-meC) from DNA by a glycosylase/lyase mechanism. Allows the expression of the maternal copy of the imprinted MEA gene before fertilization, possibly by antagonizing or suppressing DNA methylation on target promoter. Probably acts by nicking the MEA promoter. Required for stable reproducible patterns of floral and vegetative development. The protein is Transcriptional activator DEMETER (DME) of Arabidopsis thaliana (Mouse-ear cress).